A 261-amino-acid chain; its full sequence is Cytochrome c oxidase subunit 3 (261 aa).

At 1–15 (MAHQAHAYHMVDPSP) the chain is on the mitochondrial matrix side. Residues 16–34 (WPLTGAVAALLMTSGLAVW) traverse the membrane as a helical segment. Residues 35–40 (FHFHSM) are Mitochondrial intermembrane-facing. The helical transmembrane segment at 41–66 (YLLYLGLTLLLLTMVQWWRDIIREGT) threads the bilayer. The Mitochondrial matrix portion of the chain corresponds to 67-72 (FQGHHT). The chain crosses the membrane as a helical span at residues 73–105 (PPVQKGLRYGMILFITSEVFFFLGFFWAFYHSS). The Mitochondrial intermembrane segment spans residues 106–128 (LAPTPELGGCWPPTGIYPLDPFE). A helical transmembrane segment spans residues 129–152 (VPLLNTAVLLASGVTVTWAHHSLM). The Mitochondrial matrix segment spans residues 153–155 (EGN). A helical membrane pass occupies residues 156-183 (RKEAIQALTLTVLLGFYFTALQAMEYYE). The Mitochondrial intermembrane segment spans residues 184–190 (APFTIAD). The chain crosses the membrane as a helical span at residues 191-223 (GVYGSTFFVATGFHGLHVIIGSTFLMVCLLRQI). Over 224-232 (QYHFTSEHH) the chain is Mitochondrial matrix. The helical transmembrane segment at 233 to 256 (FGFERAAWYWHFVDVVWLFLYVSI) threads the bilayer. The Mitochondrial intermembrane portion of the chain corresponds to 257 to 261 (YWWGS).

This sequence belongs to the cytochrome c oxidase subunit 3 family. Component of the cytochrome c oxidase (complex IV, CIV), a multisubunit enzyme composed of 14 subunits. The complex is composed of a catalytic core of 3 subunits MT-CO1, MT-CO2 and MT-CO3, encoded in the mitochondrial DNA, and 11 supernumerary subunits COX4I, COX5A, COX5B, COX6A, COX6B, COX6C, COX7A, COX7B, COX7C, COX8 and NDUFA4, which are encoded in the nuclear genome. The complex exists as a monomer or a dimer and forms supercomplexes (SCs) in the inner mitochondrial membrane with NADH-ubiquinone oxidoreductase (complex I, CI) and ubiquinol-cytochrome c oxidoreductase (cytochrome b-c1 complex, complex III, CIII), resulting in different assemblies (supercomplex SCI(1)III(2)IV(1) and megacomplex MCI(2)III(2)IV(2)).

Its subcellular location is the mitochondrion inner membrane. It catalyses the reaction 4 Fe(II)-[cytochrome c] + O2 + 8 H(+)(in) = 4 Fe(III)-[cytochrome c] + 2 H2O + 4 H(+)(out). Functionally, component of the cytochrome c oxidase, the last enzyme in the mitochondrial electron transport chain which drives oxidative phosphorylation. The respiratory chain contains 3 multisubunit complexes succinate dehydrogenase (complex II, CII), ubiquinol-cytochrome c oxidoreductase (cytochrome b-c1 complex, complex III, CIII) and cytochrome c oxidase (complex IV, CIV), that cooperate to transfer electrons derived from NADH and succinate to molecular oxygen, creating an electrochemical gradient over the inner membrane that drives transmembrane transport and the ATP synthase. Cytochrome c oxidase is the component of the respiratory chain that catalyzes the reduction of oxygen to water. Electrons originating from reduced cytochrome c in the intermembrane space (IMS) are transferred via the dinuclear copper A center (CU(A)) of subunit 2 and heme A of subunit 1 to the active site in subunit 1, a binuclear center (BNC) formed by heme A3 and copper B (CU(B)). The BNC reduces molecular oxygen to 2 water molecules using 4 electrons from cytochrome c in the IMS and 4 protons from the mitochondrial matrix. The sequence is that of Cytochrome c oxidase subunit 3 (MT-CO3) from Squalus acanthias (Spiny dogfish).